Here is a 323-residue protein sequence, read N- to C-terminus: Olfactory receptor 4K5 (323 aa).

At 1 to 25 (MDKSNSSVVSEFVLLGLCSSQKLQL) the chain is on the extracellular side. A glycan (N-linked (GlcNAc...) asparagine) is linked at asparagine 5. Residues 26–49 (FYFCFFSVLYTVIVLGNLLIILTV) form a helical membrane-spanning segment. Residues 50–57 (TSDTSLHS) lie on the Cytoplasmic side of the membrane. A helical transmembrane segment spans residues 58 to 79 (PMYFLLGNLSFVDICQASFATP). The Extracellular portion of the chain corresponds to 80 to 100 (KMIADFLSAHETISFSGCIAQ). Residues cysteine 97 and cysteine 189 are joined by a disulfide bond. The helical transmembrane segment at 101–120 (IFFIHLFTGGEMVLLVSMAY) threads the bilayer. The Cytoplasmic segment spans residues 121-139 (DRYVAICKPLYYVVIMSRR). A helical transmembrane segment spans residues 140 to 158 (TCTVLVMISWAVSLVHTLS). At 159-195 (QLSFTVNLPFCGPNVVDSFFCDLPRVTKLACLDSYII) the chain is on the extracellular side. Residues 196 to 219 (EILIVVNSGILSLSTFSLLVSSYI) form a helical membrane-spanning segment. At 220 to 235 (IILVTVWLKSSAAMAK) the chain is on the cytoplasmic side. A helical transmembrane segment spans residues 236-258 (AFSTLASHIAVVILFFGPCIFIY). The Extracellular segment spans residues 259–269 (VWPFTISPLDK). Residues 270 to 289 (FLAIFYTVFTPVLNPIIYTL) form a helical membrane-spanning segment. Residues 290–323 (RNRDMKAAVRKIVNHYLRPRRISEMSLVVRTSFH) lie on the Cytoplasmic side of the membrane.

This sequence belongs to the G-protein coupled receptor 1 family.

The protein localises to the cell membrane. Functionally, odorant receptor. The polypeptide is Olfactory receptor 4K5 (OR4K5) (Homo sapiens (Human)).